Consider the following 333-residue polypeptide: GTPase Obg (333 aa).

In terms of domain architecture, Obg spans 1–158; that stretch reads MFIDSAKIYV…RNIDLELKLL (158 aa). The segment at 121–143 is disordered; the sequence is HGGKGNQHFATPTNRAPRYSEPA. In terms of domain architecture, OBG-type G spans 159–323; sequence ADIGLVGFPN…LKDVLWRIIQ (165 aa). GTP-binding positions include 165–172, 190–194, 212–215, 279–282, and 304–306; these read GFPNAGKS, FTTLE, DIPG, SKMD, and SSV. Residues Ser172 and Thr192 each contribute to the Mg(2+) site.

The protein belongs to the TRAFAC class OBG-HflX-like GTPase superfamily. OBG GTPase family. Monomer. Requires Mg(2+) as cofactor.

It is found in the cytoplasm. In terms of biological role, an essential GTPase which binds GTP, GDP and possibly (p)ppGpp with moderate affinity, with high nucleotide exchange rates and a fairly low GTP hydrolysis rate. Plays a role in control of the cell cycle, stress response, ribosome biogenesis and in those bacteria that undergo differentiation, in morphogenesis control. The chain is GTPase Obg from Chloroherpeton thalassium (strain ATCC 35110 / GB-78).